The sequence spans 115 residues: Large ribosomal subunit protein bL19 (115 aa).

The protein belongs to the bacterial ribosomal protein bL19 family.

Its function is as follows. This protein is located at the 30S-50S ribosomal subunit interface and may play a role in the structure and function of the aminoacyl-tRNA binding site. In Pectobacterium carotovorum subsp. carotovorum (strain PC1), this protein is Large ribosomal subunit protein bL19.